Consider the following 122-residue polypeptide: Serum amyloid A-1 protein (122 aa).

The N-terminal stretch at 1-18 (MKLLTGLVFCSLVLGVSS) is a signal peptide. Residues 19-45 (RSFFSFLGEAFDGARDMWRAYSDMREA) are important for amyloid formation; forms amyloid fibrils in vitro. Residues 95-122 (LADQAANEWGRSGKDPNHFRPAGLPEKY) constitute a propeptide, often cleaved during amyloidogenesis. The disordered stretch occupies residues 98–122 (QAANEWGRSGKDPNHFRPAGLPEKY). Asn-101 is subject to N4,N4-dimethylasparagine.

Belongs to the SAA family. In terms of assembly, homohexamer; dimer of trimers. Can form amyloid fibrils after partial proteolysis; the native, undenatured protein does not form amyloid fibrils (in vitro). Apolipoprotein of the HDL complex. Binds to heparin. In terms of processing, this protein is the precursor of amyloid protein A, which is formed by the removal of approximately 24 residues from the C-terminal end. In terms of tissue distribution, expressed by the liver; secreted in plasma (at protein level).

It is found in the secreted. Functionally, major acute phase protein. In Homo sapiens (Human), this protein is Serum amyloid A-1 protein (SAA1).